The following is a 100-amino-acid chain: MQLTPREVEKLMVYTLADVALKRKQRGVKLNYPEAVSIITVTAMEGARDGKTVEEVMNEARSVLTRDDVMDGVVELIPNVQVEAIFTDGSRLVTVHDPIQ.

Belongs to the urease gamma subunit family. Heterotrimer of UreA (gamma), UreB (beta) and UreC (alpha) subunits. Three heterotrimers associate to form the active enzyme.

The protein resides in the cytoplasm. It carries out the reaction urea + 2 H2O + H(+) = hydrogencarbonate + 2 NH4(+). It participates in nitrogen metabolism; urea degradation; CO(2) and NH(3) from urea (urease route): step 1/1. This Edwardsiella ictaluri (strain 93-146) protein is Urease subunit gamma.